Here is a 365-residue protein sequence, read N- to C-terminus: Probable dual-specificity RNA methyltransferase RlmN (365 aa).

The Proton acceptor role is filled by Glu108. The 239-residue stretch at 114 to 352 (YPDRNTVCIS…SCTVRDTRGR (239 aa)) folds into the Radical SAM core domain. Cysteines 121 and 358 form a disulfide. [4Fe-4S] cluster contacts are provided by Cys128, Cys132, and Cys135. Residues 179-180 (GE), Ser213, 236-238 (SLH), and Asn315 contribute to the S-adenosyl-L-methionine site. The active-site S-methylcysteine intermediate is the Cys358.

This sequence belongs to the radical SAM superfamily. RlmN family. Requires [4Fe-4S] cluster as cofactor.

The protein resides in the cytoplasm. The catalysed reaction is adenosine(2503) in 23S rRNA + 2 reduced [2Fe-2S]-[ferredoxin] + 2 S-adenosyl-L-methionine = 2-methyladenosine(2503) in 23S rRNA + 5'-deoxyadenosine + L-methionine + 2 oxidized [2Fe-2S]-[ferredoxin] + S-adenosyl-L-homocysteine. The enzyme catalyses adenosine(37) in tRNA + 2 reduced [2Fe-2S]-[ferredoxin] + 2 S-adenosyl-L-methionine = 2-methyladenosine(37) in tRNA + 5'-deoxyadenosine + L-methionine + 2 oxidized [2Fe-2S]-[ferredoxin] + S-adenosyl-L-homocysteine. In terms of biological role, specifically methylates position 2 of adenine 2503 in 23S rRNA and position 2 of adenine 37 in tRNAs. The sequence is that of Probable dual-specificity RNA methyltransferase RlmN from Mycolicibacterium vanbaalenii (strain DSM 7251 / JCM 13017 / BCRC 16820 / KCTC 9966 / NRRL B-24157 / PYR-1) (Mycobacterium vanbaalenii).